Consider the following 375-residue polypeptide: 23S rRNA (uracil(747)-C(5))-methyltransferase RlmC (375 aa).

Positions 3, 11, 14, and 87 each coordinate [4Fe-4S] cluster. S-adenosyl-L-methionine-binding residues include Q212, F241, E262, and N307. The Nucleophile role is filled by C334.

This sequence belongs to the class I-like SAM-binding methyltransferase superfamily. RNA M5U methyltransferase family. RlmC subfamily.

It catalyses the reaction uridine(747) in 23S rRNA + S-adenosyl-L-methionine = 5-methyluridine(747) in 23S rRNA + S-adenosyl-L-homocysteine + H(+). Functionally, catalyzes the formation of 5-methyl-uridine at position 747 (m5U747) in 23S rRNA. This Enterobacter sp. (strain 638) protein is 23S rRNA (uracil(747)-C(5))-methyltransferase RlmC.